We begin with the raw amino-acid sequence, 302 residues long: 4-hydroxy-tetrahydrodipicolinate synthase (302 aa).

Threonine 55 contacts pyruvate. Tyrosine 144 functions as the Proton donor/acceptor in the catalytic mechanism. The active-site Schiff-base intermediate with substrate is lysine 172. Valine 214 serves as a coordination point for pyruvate.

This sequence belongs to the DapA family. Homotetramer; dimer of dimers.

The protein resides in the cytoplasm. The catalysed reaction is L-aspartate 4-semialdehyde + pyruvate = (2S,4S)-4-hydroxy-2,3,4,5-tetrahydrodipicolinate + H2O + H(+). The protein operates within amino-acid biosynthesis; L-lysine biosynthesis via DAP pathway; (S)-tetrahydrodipicolinate from L-aspartate: step 3/4. In terms of biological role, catalyzes the condensation of (S)-aspartate-beta-semialdehyde [(S)-ASA] and pyruvate to 4-hydroxy-tetrahydrodipicolinate (HTPA). This is 4-hydroxy-tetrahydrodipicolinate synthase from Prochlorococcus marinus (strain MIT 9211).